The chain runs to 271 residues: Aquaporin-2 (271 aa).

Over 1-11 the chain is Cytoplasmic; that stretch reads MWELRSIAFSR. Residues 12–32 traverse the membrane as a helical segment; it reads AVLAEFLATLLFVFFGLGSAL. Topologically, residues 33–40 are extracellular; sequence QWASSPPS. Residues 41–59 form a helical membrane-spanning segment; it reads VLQIAVAFGLGIGILVQAL. Residues 60 to 64 are Cytoplasmic-facing; the sequence is GHVSG. An intramembrane region (discontinuously helical) is located at residues 65–74; that stretch reads AHINPAVTVA. The short motif at 68 to 70 is the NPA 1 element; sequence NPA. Over 75–85 the chain is Cytoplasmic; the sequence is CLVGCHVSFLR. Residues 86-107 form a helical membrane-spanning segment; it reads AAFYVAAQLLGAVAGAAILHEI. The Extracellular segment spans residues 108–127; that stretch reads TPVEIRGDLAVNALHNNATA. Residue Asn-124 is glycosylated (N-linked (GlcNAc...) asparagine). A helical transmembrane segment spans residues 128–148; it reads GQAVTVELFLTMQLVLCIFAS. Residues 149-156 lie on the Cytoplasmic side of the membrane; sequence TDERRGDN. A helical transmembrane segment spans residues 157–176; the sequence is LGSPALSIGFSVTLGHLLGI. Residues 177–180 lie on the Extracellular side of the membrane; that stretch reads YFTG. The segment at residues 181–193 is an intramembrane region (discontinuously helical); that stretch reads CSMNPARSLAPAV. The short motif at 184–186 is the NPA 2 element; the sequence is NPA. At 194–201 the chain is on the extracellular side; sequence VTGKFDDH. A helical membrane pass occupies residues 202-222; the sequence is WVFWIGPLVGAIIGSLLYNYL. Over 223–271 the chain is Cytoplasmic; sequence LFPSAKSLQERLAVLKGLEPDTDWEEREVRRRQSVELHSPQSLPRGSKA. The tract at residues 251 to 271 is disordered; sequence VRRRQSVELHSPQSLPRGSKA. Phosphoserine occurs at positions 256, 261, 264, and 269. Positions 261-271 are enriched in polar residues; it reads SPQSLPRGSKA.

This sequence belongs to the MIP/aquaporin (TC 1.A.8) family. In terms of assembly, homotetramer. Ser-256 phosphorylation is necessary and sufficient for expression at the apical membrane. Endocytosis is not phosphorylation-dependent. Post-translationally, N-glycosylated. As to expression, detected in kidney, in cortical and the medullary collecting tubules (at protein level). Detected in kidney medulla and cortex.

It is found in the apical cell membrane. It localises to the basolateral cell membrane. The protein resides in the cell membrane. Its subcellular location is the cytoplasmic vesicle membrane. The protein localises to the golgi apparatus. It is found in the trans-Golgi network membrane. The enzyme catalyses H2O(in) = H2O(out). It carries out the reaction glycerol(in) = glycerol(out). Forms a water-specific channel that provides the plasma membranes of renal collecting duct with high permeability to water, thereby permitting water to move in the direction of an osmotic gradient. Plays an essential role in renal water homeostasis. Could also be permeable to glycerol. This chain is Aquaporin-2, found in Rattus norvegicus (Rat).